The chain runs to 150 residues: Putative F-box protein At2g33655 (150 aa).

One can recognise an F-box domain in the interval 1–47 (MEKMSDLPRELVEEILSRVPVKSMREVRVTCKTWNALSKHISKAEAA).

The polypeptide is Putative F-box protein At2g33655 (Arabidopsis thaliana (Mouse-ear cress)).